The primary structure comprises 175 residues: Crossover junction endodeoxyribonuclease RuvC (175 aa).

Active-site residues include D8, E68, and D140. Residues D8, E68, and D140 each contribute to the Mg(2+) site.

This sequence belongs to the RuvC family. Homodimer which binds Holliday junction (HJ) DNA. The HJ becomes 2-fold symmetrical on binding to RuvC with unstacked arms; it has a different conformation from HJ DNA in complex with RuvA. In the full resolvosome a probable DNA-RuvA(4)-RuvB(12)-RuvC(2) complex forms which resolves the HJ. Requires Mg(2+) as cofactor.

The protein resides in the cytoplasm. The catalysed reaction is Endonucleolytic cleavage at a junction such as a reciprocal single-stranded crossover between two homologous DNA duplexes (Holliday junction).. The RuvA-RuvB-RuvC complex processes Holliday junction (HJ) DNA during genetic recombination and DNA repair. Endonuclease that resolves HJ intermediates. Cleaves cruciform DNA by making single-stranded nicks across the HJ at symmetrical positions within the homologous arms, yielding a 5'-phosphate and a 3'-hydroxyl group; requires a central core of homology in the junction. The consensus cleavage sequence is 5'-(A/T)TT(C/G)-3'. Cleavage occurs on the 3'-side of the TT dinucleotide at the point of strand exchange. HJ branch migration catalyzed by RuvA-RuvB allows RuvC to scan DNA until it finds its consensus sequence, where it cleaves and resolves the cruciform DNA. The polypeptide is Crossover junction endodeoxyribonuclease RuvC (Pseudomonas fluorescens (strain Pf0-1)).